The primary structure comprises 257 residues: Putative pentatricopeptide repeat-containing protein At1g43010 (257 aa).

PPR repeat units lie at residues 133-168 and 169-203; these read KMRDYSVLLSSYTKPVRTVDKAEATFKKMRELGFLL and KPYLFNSMICLYGQLQRLDMVEKLLYKLKKNNMEV.

This sequence belongs to the PPR family. P subfamily.

This Arabidopsis thaliana (Mouse-ear cress) protein is Putative pentatricopeptide repeat-containing protein At1g43010.